A 339-amino-acid polypeptide reads, in one-letter code: MMQQAIDKVIRRQDLAETEMMAVMQGIMEGKVTDSQIGGFLTALRMKGETVEEITASAKVMRSKALVVEVNQPHSIDTCGTGGDQANTFNISTAVAFVAAAAGVTVVKHGNRSVSSQCGSADVLEKLGVNIDLTPKQVETCVEQVNMGFMFAPKFHQAMKYAAAARRELGVRTIFNILGPLTNPAKVKGQVLGVFDESLTEVMAQVLKELGVERGMVVHGLDGLDEITTTTKTKVSELKNGMISNYVIDPRQFDIPLTDKEDLAGGDAEKNASIILNIVKGETGGKRNMVLINAGAAIYVGNAANSLQEGIDRAAEVIDMGLALDKLNQLIKLSQELKV.

5-phospho-alpha-D-ribose 1-diphosphate-binding positions include Gly-80, 83–84, Thr-88, 90–93, 108–116, and Ser-120; these read GD, NIST, and KHGNRSVSS. Gly-80 serves as a coordination point for anthranilate. A Mg(2+)-binding site is contributed by Ser-92. Asn-111 provides a ligand contact to anthranilate. Anthranilate is bound at residue Arg-166. Asp-225 and Glu-226 together coordinate Mg(2+).

It belongs to the anthranilate phosphoribosyltransferase family. As to quaternary structure, homodimer. Requires Mg(2+) as cofactor.

It carries out the reaction N-(5-phospho-beta-D-ribosyl)anthranilate + diphosphate = 5-phospho-alpha-D-ribose 1-diphosphate + anthranilate. It participates in amino-acid biosynthesis; L-tryptophan biosynthesis; L-tryptophan from chorismate: step 2/5. In terms of biological role, catalyzes the transfer of the phosphoribosyl group of 5-phosphorylribose-1-pyrophosphate (PRPP) to anthranilate to yield N-(5'-phosphoribosyl)-anthranilate (PRA). This chain is Anthranilate phosphoribosyltransferase, found in Alkaliphilus metalliredigens (strain QYMF).